The primary structure comprises 164 residues: Phosphopantetheine adenylyltransferase (164 aa).

Residue serine 9 coordinates substrate. Residues serine 9–phenylalanine 10 and histidine 17 contribute to the ATP site. Substrate-binding residues include lysine 41, leucine 73, and lysine 87. ATP-binding positions include glycine 88–arginine 90, glutamate 98, and tyrosine 123–serine 129.

It belongs to the bacterial CoaD family. In terms of assembly, homohexamer. It depends on Mg(2+) as a cofactor.

It localises to the cytoplasm. The enzyme catalyses (R)-4'-phosphopantetheine + ATP + H(+) = 3'-dephospho-CoA + diphosphate. It functions in the pathway cofactor biosynthesis; coenzyme A biosynthesis; CoA from (R)-pantothenate: step 4/5. Reversibly transfers an adenylyl group from ATP to 4'-phosphopantetheine, yielding dephospho-CoA (dPCoA) and pyrophosphate. The sequence is that of Phosphopantetheine adenylyltransferase from Clostridium perfringens (strain ATCC 13124 / DSM 756 / JCM 1290 / NCIMB 6125 / NCTC 8237 / Type A).